The following is a 139-amino-acid chain: Small ribosomal subunit protein uS11 (139 aa).

The tract at residues Val117–Val139 is disordered.

This sequence belongs to the universal ribosomal protein uS11 family. Part of the 30S ribosomal subunit.

Functionally, located on the platform of the 30S subunit. This Thermococcus onnurineus (strain NA1) protein is Small ribosomal subunit protein uS11.